We begin with the raw amino-acid sequence, 473 residues long: Hexaprenyl pyrophosphate synthase, mitochondrial (473 aa).

Residues Lys84, Arg87, and His186 each contribute to the isopentenyl diphosphate site. Positions 193 and 197 each coordinate Mg(2+). Arg202 contributes to the an all-trans-polyprenyl diphosphate binding site. Arg203 lines the isopentenyl diphosphate pocket. Lys323, Thr324, Gln361, and Lys378 together coordinate an all-trans-polyprenyl diphosphate.

It belongs to the FPP/GGPP synthase family. Requires Mg(2+) as cofactor.

It localises to the mitochondrion inner membrane. The protein operates within cofactor biosynthesis; ubiquinone biosynthesis. In terms of biological role, assembly of polyisoprenoid side chains. The polyprenyl synthase of coenzyme Q biosynthesis catalyzes the formation from isopentenyl diphosphate of all trans-polyprenyl pyrophosphates generally ranging in length of between 6 and 10 isoprene units depending on the species. In Saccharomyces cerevisiae (strain ATCC 204508 / S288c) (Baker's yeast), this protein is Hexaprenyl pyrophosphate synthase, mitochondrial (COQ1).